The following is a 62-amino-acid chain: Large ribosomal subunit protein eL37 (62 aa).

The Zn(2+) site is built by Cys-20, Cys-23, Cys-35, and Cys-38. The segment at 20-38 (CRRCGRRSYNVAKGYCAAC) adopts a C4-type zinc-finger fold.

The protein belongs to the eukaryotic ribosomal protein eL37 family. Zn(2+) is required as a cofactor.

Functionally, binds to the 23S rRNA. The chain is Large ribosomal subunit protein eL37 (rpl37e) from Aeropyrum pernix (strain ATCC 700893 / DSM 11879 / JCM 9820 / NBRC 100138 / K1).